Here is a 114-residue protein sequence, read N- to C-terminus: Large ribosomal subunit protein uL22 (114 aa).

The protein belongs to the universal ribosomal protein uL22 family. In terms of assembly, part of the 50S ribosomal subunit.

In terms of biological role, this protein binds specifically to 23S rRNA; its binding is stimulated by other ribosomal proteins, e.g. L4, L17, and L20. It is important during the early stages of 50S assembly. It makes multiple contacts with different domains of the 23S rRNA in the assembled 50S subunit and ribosome. Functionally, the globular domain of the protein is located near the polypeptide exit tunnel on the outside of the subunit, while an extended beta-hairpin is found that lines the wall of the exit tunnel in the center of the 70S ribosome. In Streptococcus gordonii (strain Challis / ATCC 35105 / BCRC 15272 / CH1 / DL1 / V288), this protein is Large ribosomal subunit protein uL22.